The sequence spans 553 residues: Cytochrome P450 86A2 (553 aa).

Residues 2–20 (DVSNTMLLVAVVAAYWLWF) traverse the membrane as a helical segment. Cysteine 459 provides a ligand contact to heme.

The protein belongs to the cytochrome P450 family. The cofactor is heme. In terms of tissue distribution, expressed in leaves, stems, flowers and siliques. Expressed at low levels in roots. Expressed in guard cells of cotyledons and leaves.

The protein resides in the membrane. It carries out the reaction an organic molecule + reduced [NADPH--hemoprotein reductase] + O2 = an alcohol + oxidized [NADPH--hemoprotein reductase] + H2O + H(+). In terms of biological role, catalyzes the omega-hydroxylation of various fatty acids (FA). Acts on saturated and unsaturated fatty acids with chain lengths from C12 to C18. Plays a major role in the biosynthesis of extracellular lipids. Involved in the biosynthesis of hydroxylated fatty acids required for cutin biosynthesis, cuticle development and repression of bacterial type III gene expression. This Arabidopsis thaliana (Mouse-ear cress) protein is Cytochrome P450 86A2 (CYP86A2).